The chain runs to 271 residues: Aminodeoxychorismate lyase (271 aa).

At Lys-140 the chain carries N6-(pyridoxal phosphate)lysine.

Belongs to the class-IV pyridoxal-phosphate-dependent aminotransferase family. As to quaternary structure, homodimer. The cofactor is pyridoxal 5'-phosphate.

The enzyme catalyses 4-amino-4-deoxychorismate = 4-aminobenzoate + pyruvate + H(+). It participates in cofactor biosynthesis; tetrahydrofolate biosynthesis; 4-aminobenzoate from chorismate: step 2/2. Involved in the biosynthesis of p-aminobenzoate (PABA), a precursor of tetrahydrofolate. Converts 4-amino-4-deoxychorismate into 4-aminobenzoate (PABA) and pyruvate. This chain is Aminodeoxychorismate lyase (pabC), found in Vibrio harveyi (Beneckea harveyi).